We begin with the raw amino-acid sequence, 207 residues long: Ribonuclease HII (207 aa).

Residues 5–207 (PLIIGVDEAG…APVRALLRPC (203 aa)) form the RNase H type-2 domain. A divalent metal cation-binding residues include aspartate 11, glutamate 12, and aspartate 117.

This sequence belongs to the RNase HII family. It depends on Mn(2+) as a cofactor. Mg(2+) serves as cofactor.

It localises to the cytoplasm. It catalyses the reaction Endonucleolytic cleavage to 5'-phosphomonoester.. Its function is as follows. Endonuclease that specifically degrades the RNA of RNA-DNA hybrids. The sequence is that of Ribonuclease HII from Hyphomonas neptunium (strain ATCC 15444).